The sequence spans 310 residues: Homoserine kinase (310 aa).

91–101 (PLARGLGSSAA) is a binding site for ATP.

It belongs to the GHMP kinase family. Homoserine kinase subfamily.

The protein localises to the cytoplasm. The catalysed reaction is L-homoserine + ATP = O-phospho-L-homoserine + ADP + H(+). The protein operates within amino-acid biosynthesis; L-threonine biosynthesis; L-threonine from L-aspartate: step 4/5. Its function is as follows. Catalyzes the ATP-dependent phosphorylation of L-homoserine to L-homoserine phosphate. The chain is Homoserine kinase from Bacillus pumilus (strain SAFR-032).